Consider the following 329-residue polypeptide: MDKWYKKIIGARTIKTGLATFLTSLFCLMLDLTPIFAILTAIVTIEPTAKASLKKGYRRLPATVIGALFAVLFTFIFGDPSALTYTFSALFTILVCTKLNLQVGTTVAVLTSVAMIPGIHDAYLFNFFSRLLTALIGLVTAGLVNFIVLPPKYYQQIEDNLTQSEYKMYELFSSRCNELLLGKFDSDHSNDLLNKLMGVINKTETLTGYQKDELRYHKNKEDEWKRLKNISNRSYIDRLLATHLSNIIYLPKHIHLVFTPEEKIAIIKISNSVNNIIKSNHFEPHRSSASTLKSSVKRLEEFDQNQIKSHVIYEILLIYKLLDSRYNDK.

5 helical membrane-spanning segments follow: residues 25–45 (LFCL…IVTI), 60–80 (LPAT…FGDP), 87–107 (FSAL…GTTV), 108–128 (AVLT…FNFF), and 131–151 (LLTA…VLPP).

It belongs to the UPF0421 family.

It localises to the cell membrane. This chain is UPF0421 protein SH1063, found in Staphylococcus haemolyticus (strain JCSC1435).